The following is a 429-amino-acid chain: MDRIRIVGGQELNGVIQISGAKNAALPLMIASLLTAETLTLDNLPNLADVNMLLRILGHHGVDHSVDGRRLGAAPNASRPVHLTARDIVDTTAPYELVSKMRASFWVIAPLLARMGEAKVSLPGGCAIGTRPVDLLIMALEKLGASVEIEAGYVHAKAPKGLRGAEIKFPKVTVGGTHTALMAASLAHGHTRIVNAAREPEVVDLAECLVKMGARIKGAGQSVIDVEGVARLNGASHRVLPDRIEAGTYAIAAAMAGGDVMLEGAEAGLLQSALDVLVEAGATVNVVNEGIRVQRNGAGLMPVDIVTAPFPGFPTDLQAQFMALMTKAKGQSRITETIFENRFMHVQELARLGAHIRLDGDVALVDGVERLEGAPVMATDLRASVSLVIAALAAEGETMVNRVYHLDRGFEHLETKLGGCGAIIERLSG.

22–23 serves as a coordination point for phosphoenolpyruvate; sequence KN. Residue Arg-102 coordinates UDP-N-acetyl-alpha-D-glucosamine. The active-site Proton donor is Cys-126. Residue Cys-126 is modified to 2-(S-cysteinyl)pyruvic acid O-phosphothioketal. UDP-N-acetyl-alpha-D-glucosamine is bound by residues 131–135, Asp-316, and Ile-338; that span reads RPVDL.

It belongs to the EPSP synthase family. MurA subfamily.

The protein resides in the cytoplasm. It catalyses the reaction phosphoenolpyruvate + UDP-N-acetyl-alpha-D-glucosamine = UDP-N-acetyl-3-O-(1-carboxyvinyl)-alpha-D-glucosamine + phosphate. Its pathway is cell wall biogenesis; peptidoglycan biosynthesis. Cell wall formation. Adds enolpyruvyl to UDP-N-acetylglucosamine. In Methylocella silvestris (strain DSM 15510 / CIP 108128 / LMG 27833 / NCIMB 13906 / BL2), this protein is UDP-N-acetylglucosamine 1-carboxyvinyltransferase.